A 176-amino-acid chain; its full sequence is Probable inosine/xanthosine triphosphatase (176 aa).

Position 36 (D36) interacts with Mg(2+).

Belongs to the YjjX NTPase family. In terms of assembly, homodimer. Requires Mg(2+) as cofactor. The cofactor is Mn(2+).

It catalyses the reaction XTP + H2O = XDP + phosphate + H(+). It carries out the reaction ITP + H2O = IDP + phosphate + H(+). In terms of biological role, phosphatase that hydrolyzes non-canonical purine nucleotides such as XTP and ITP to their respective diphosphate derivatives. Probably excludes non-canonical purines from DNA/RNA precursor pool, thus preventing their incorporation into DNA/RNA and avoiding chromosomal lesions. The sequence is that of Probable inosine/xanthosine triphosphatase from Saccharolobus islandicus (strain M.14.25 / Kamchatka #1) (Sulfolobus islandicus).